A 354-amino-acid polypeptide reads, in one-letter code: tRNA N6-adenosine threonylcarbamoyltransferase (354 aa).

Residues His111 and His115 each coordinate Fe cation. Substrate-binding positions include 134–138 (LVSGG), Asp167, Gly180, and Asn279. Asp319 is a binding site for Fe cation.

Belongs to the KAE1 / TsaD family. Requires Fe(2+) as cofactor.

It localises to the cytoplasm. It catalyses the reaction L-threonylcarbamoyladenylate + adenosine(37) in tRNA = N(6)-L-threonylcarbamoyladenosine(37) in tRNA + AMP + H(+). Its function is as follows. Required for the formation of a threonylcarbamoyl group on adenosine at position 37 (t(6)A37) in tRNAs that read codons beginning with adenine. Is involved in the transfer of the threonylcarbamoyl moiety of threonylcarbamoyl-AMP (TC-AMP) to the N6 group of A37, together with TsaE and TsaB. TsaD likely plays a direct catalytic role in this reaction. In Neisseria meningitidis serogroup B (strain ATCC BAA-335 / MC58), this protein is tRNA N6-adenosine threonylcarbamoyltransferase.